Consider the following 333-residue polypeptide: MAVHQYTVALFLAVALVAGPAASYAADVGYGAPATLATPATPAAPAAGYTPAAPAGAAPKATTDEQKLIEKINAGFKAAVAAAAGVPAVDKYKTFVATFGTASNKAFAEALSTEPKGAAAASSNAVLTSKLDAAYKLAYKSAEGATPEAKYDAYVATLSEALRIIAGTLEVHAVKPAGEEVKAIPAGELQVIDKVDAAFKVAATAANAAPANDKFTVFEAAFNDAIKASTGGAYQSYKFIPALEAAVKQSYAATVATAPAVKYTVFETALKKAITAMSQAQKAAKPAAAVTATATGAVGAATGAVGAATGAATAAAGGYKTGAATPTAGGYKV.

The first 23 residues, 1-23, serve as a signal peptide directing secretion; sequence MAVHQYTVALFLAVALVAGPAAS. 2 repeat units span residues 309–320 and 321–332. The segment at 309 to 332 is 2 X 12 AA tandem repeats; that stretch reads TGAATAAAGGYKTGAATPTAGGYK.

Belongs to the Poa p IX/Phl p VI allergen family. Pollen.

This chain is Pollen allergen KBG 41, found in Poa pratensis (Kentucky bluegrass).